The sequence spans 159 residues: Bacterioferritin (159 aa).

Positions 1–145 constitute a Ferritin-like diiron domain; it reads MQGDPDVLRL…TQLALMGQLG (145 aa). Residues Glu18 and Glu51 each coordinate Fe cation. Residue Met52 participates in heme b binding. The Fe cation site is built by His54, Glu94, Glu127, and His130.

It belongs to the bacterioferritin family. As to quaternary structure, homooligomer of 24 subunits, arranged as 12 dimers, that are packed together to form an approximately spherical molecule with a central cavity, in which large amounts of iron can be deposited. Heme b serves as cofactor.

Its subcellular location is the cytoplasm. The protein localises to the cytosol. The protein resides in the membrane. The catalysed reaction is 4 Fe(2+) + O2 + 4 H(+) = 4 Fe(3+) + 2 H2O. It catalyses the reaction Fe(2+)(in) = Fe(2+)(out). Its function is as follows. Iron-storage protein, whose ferroxidase center binds Fe(2+), oxidizes it using dioxygen to Fe(3+), and participates in the subsequent Fe(3+) oxide mineral core formation within the central cavity of the BFR protein shell. Probably plays a crucial role in the intracellular existence of this organism by functioning as a temporary depository for iron in iron deprivation. This chain is Bacterioferritin (bfr), found in Mycobacterium leprae (strain TN).